A 211-amino-acid chain; its full sequence is Uridine kinase (211 aa).

Residue 12 to 19 (GGSGSGKT) participates in ATP binding.

Belongs to the uridine kinase family.

The protein resides in the cytoplasm. The enzyme catalyses uridine + ATP = UMP + ADP + H(+). It carries out the reaction cytidine + ATP = CMP + ADP + H(+). It participates in pyrimidine metabolism; CTP biosynthesis via salvage pathway; CTP from cytidine: step 1/3. Its pathway is pyrimidine metabolism; UMP biosynthesis via salvage pathway; UMP from uridine: step 1/1. This chain is Uridine kinase (udk), found in Bacillus subtilis (strain 168).